A 928-amino-acid chain; its full sequence is Interphotoreceptor matrix proteoglycan 1 (928 aa).

The signal sequence occupies residues 1–20 (MHLKTGLIFLAICLALQVQG). Residues 26 to 50 (SKTNHGEAKQLADASGSDKTERTTK) form a disordered region. Positions 29-49 (NHGEAKQLADASGSDKTERTT) are enriched in basic and acidic residues. Residue Asn-143 is glycosylated (N-linked (GlcNAc...) asparagine). Positions 164–182 (QERKDEISTDKTGGKKLED) are enriched in basic and acidic residues. The tract at residues 164–191 (QERKDEISTDKTGGKKLEDIPSVSTGPP) is disordered. N-linked (GlcNAc...) asparagine glycans are attached at residues Asn-203 and Asn-212. The SEA 1 domain maps to 231 to 356 (AEQMVEFSVT…TKLTVTDLQQ (126 aa)). Disordered regions lie at residues 441-481 (LSRE…TEDI) and 494-522 (ALVS…NDLI). Over residues 466–477 (PSREPPHDRSPD) the composition is skewed to basic and acidic residues. The region spanning 735-848 (KELVVFFSLR…YSLDIEPADQ (114 aa)) is the SEA 2 domain. Asn-756 and Asn-780 each carry an N-linked (GlcNAc...) asparagine glycan. The Heparin- and hyaluronan-binding motif lies at 785–793 (KQLEILNFR). Asn-794 and Asn-812 each carry an N-linked (GlcNAc...) asparagine glycan.

In terms of processing, highly glycosylated (N- and O-linked carbohydrates and sialic acid). In terms of tissue distribution, abundantly expressed in the retina (at protein level). Localizes to the photoreceptor layer of the interphotoreceptor matrix of the retina (at protein level).

Its subcellular location is the cell projection. The protein localises to the cilium. It localises to the photoreceptor outer segment. It is found in the secreted. The protein resides in the extracellular space. Its subcellular location is the extracellular matrix. The protein localises to the interphotoreceptor matrix. It localises to the photoreceptor inner segment. Its function is as follows. Chondroitin sulfate-, heparin- and hyaluronan-binding protein. May serve to form a basic macromolecular scaffold comprising the insoluble interphotoreceptor matrix. The protein is Interphotoreceptor matrix proteoglycan 1 of Gallus gallus (Chicken).